Reading from the N-terminus, the 1026-residue chain is RecBCD enzyme subunit RecB (1026 aa).

The 438-residue stretch at 1 to 438 (MSSFDIFSPT…LILDTNYRST (438 aa)) folds into the UvrD-like helicase ATP-binding domain. The interval 1–766 (MSSFDIFSPT…LANYANITQH (766 aa)) is DNA-binding and helicase activity, interacts with RecC. 21-28 (ASAGTGKT) is a binding site for ATP. The UvrD-like helicase C-terminal domain maps to 452 to 700 (PSPFLETPQT…KITTVHSSKG (249 aa)). The nuclease activity, interacts with RecD and RecA stretch occupies residues 815–1026 (SQPIYSFSST…KGNGFLQPSP (212 aa)). Residues His854, Asp940, and Asp953 each contribute to the Mg(2+) site. The active-site For nuclease activity is the Asp953.

Belongs to the helicase family. UvrD subfamily. In terms of assembly, heterotrimer of RecB, RecC and RecD. All subunits contribute to DNA-binding. Interacts with RecA. It depends on Mg(2+) as a cofactor.

It catalyses the reaction Exonucleolytic cleavage (in the presence of ATP) in either 5'- to 3'- or 3'- to 5'-direction to yield 5'-phosphooligonucleotides.. It carries out the reaction Couples ATP hydrolysis with the unwinding of duplex DNA by translocating in the 3'-5' direction.. The enzyme catalyses ATP + H2O = ADP + phosphate + H(+). A helicase/nuclease that prepares dsDNA breaks (DSB) for recombinational DNA repair. Binds to DSBs and unwinds DNA via a highly rapid and processive ATP-dependent bidirectional helicase activity. Unwinds dsDNA until it encounters a Chi (crossover hotspot instigator) sequence from the 3' direction. Cuts ssDNA a few nucleotides 3' to the Chi site. The properties and activities of the enzyme are changed at Chi. The Chi-altered holoenzyme produces a long 3'-ssDNA overhang and facilitates RecA-binding to the ssDNA for homologous DNA recombination and repair. Holoenzyme degrades any linearized DNA that is unable to undergo homologous recombination. In the holoenzyme this subunit contributes ATPase, 3'-5' helicase, exonuclease activity and loads RecA onto ssDNA. The sequence is that of RecBCD enzyme subunit RecB from Chlamydia muridarum (strain MoPn / Nigg).